The sequence spans 477 residues: Tripartite motif-containing protein 72 (477 aa).

Residues Leu14, Gln17, Pro29, Cys31, Thr34, Gln37, Thr53, Pro56, Gly86, Leu89, Val97, Glu100, Leu105, Gly108, Gly114, and Lys117 each coordinate Zn(2+). The segment at 16 to 59 (CQLCLELFRAPVTPECGHTFCQGCLTGVPKNQDQNGSTPCPTCQ) adopts an RING-type zinc-finger fold. A B box-type zinc finger spans residues 83-124 (VPQGHCLEHMDPLSVYCEQDKELICGVCASLGKHKGHNIITA). Positions 135–232 (LPQQQVILQE…QMEGVLKDVE (98 aa)) form a coiled coil. Residues 272-476 (DEFKFQVWRK…LKIFYPPAEQ (205 aa)) enclose the B30.2/SPRY domain.

This sequence belongs to the TRIM/RBCC family. In terms of assembly, homodimer. Homooligomer; disulfide-linked. Oligomerizes on the phospholipid membrane. In terms of processing, disulfide bond formation at Cys-244 occurs in case of membrane damage that cause the entry of the oxidized milieu of the extracellular space, resulting in homooligomerization.

It localises to the cell membrane. Its subcellular location is the sarcolemma. The protein resides in the cytoplasmic vesicle membrane. It carries out the reaction S-ubiquitinyl-[E2 ubiquitin-conjugating enzyme]-L-cysteine + [acceptor protein]-L-lysine = [E2 ubiquitin-conjugating enzyme]-L-cysteine + N(6)-ubiquitinyl-[acceptor protein]-L-lysine.. It participates in protein modification; protein ubiquitination. Specifically binds phosphatidylserine. The binding to phospholipids enhances ubiquitination activity. Functionally, muscle-specific E3 ubiquitin-protein ligase that plays a central role in cell membrane repair by nucleating the assembly of the repair machinery at injury sites. Acts as a sensor of oxidation: upon membrane damage, entry of extracellular oxidative environment results in disulfide bond formation and homooligomerization at the injury site. This oligomerization acts as a nucleation site for recruitment of TRIM72-containing vesicles to the injury site, leading to membrane patch formation. Probably acts upstream of the Ca(2+)-dependent membrane resealing process. Required for transport of DYSF to sites of cell injury during repair patch formation. Regulates membrane budding and exocytosis. May be involved in the regulation of the mobility of KCNB1-containing endocytic vesicles. This Xenopus laevis (African clawed frog) protein is Tripartite motif-containing protein 72 (trim72).